The sequence spans 386 residues: Alanine racemase (386 aa).

The Proton acceptor; specific for D-alanine role is filled by Lys48. An N6-(pyridoxal phosphate)lysine modification is found at Lys48. Arg149 serves as a coordination point for substrate. Tyr278 functions as the Proton acceptor; specific for L-alanine in the catalytic mechanism. A substrate-binding site is contributed by Met326.

Belongs to the alanine racemase family. It depends on pyridoxal 5'-phosphate as a cofactor.

The enzyme catalyses L-alanine = D-alanine. It participates in amino-acid biosynthesis; D-alanine biosynthesis; D-alanine from L-alanine: step 1/1. Catalyzes the interconversion of L-alanine and D-alanine. May also act on other amino acids. This Nostoc sp. (strain PCC 7120 / SAG 25.82 / UTEX 2576) protein is Alanine racemase (alr).